The chain runs to 108 residues: UPF0060 membrane protein BLi00854/BL03049 (108 aa).

4 consecutive transmembrane segments (helical) span residues 3 to 23 (IAIG…YLVW), 31 to 51 (PLWY…IPAF), 60 to 80 (VYAA…WLVD), and 86 to 106 (LYDW…LWAP).

Belongs to the UPF0060 family.

The protein localises to the cell membrane. This is UPF0060 membrane protein BLi00854/BL03049 from Bacillus licheniformis (strain ATCC 14580 / DSM 13 / JCM 2505 / CCUG 7422 / NBRC 12200 / NCIMB 9375 / NCTC 10341 / NRRL NRS-1264 / Gibson 46).